Consider the following 181-residue polypeptide: Ribosome maturation factor RimM (181 aa).

The PRC barrel domain maps to 99–172 (EDEFYQVDLI…FLIVDPMAAG (74 aa)).

Belongs to the RimM family. In terms of assembly, binds ribosomal protein uS19.

The protein resides in the cytoplasm. Its function is as follows. An accessory protein needed during the final step in the assembly of 30S ribosomal subunit, possibly for assembly of the head region. Essential for efficient processing of 16S rRNA. May be needed both before and after RbfA during the maturation of 16S rRNA. It has affinity for free ribosomal 30S subunits but not for 70S ribosomes. The chain is Ribosome maturation factor RimM from Bartonella tribocorum (strain CIP 105476 / IBS 506).